Here is a 151-residue protein sequence, read N- to C-terminus: Small ribosomal subunit protein uS15 (151 aa).

Belongs to the universal ribosomal protein uS15 family.

The sequence is that of Small ribosomal subunit protein uS15 (RpS13) from Choristoneura parallela (Spotted fireworm moth).